The primary structure comprises 467 residues: Coiled-coil domain-containing protein 174 (467 aa).

Disordered stretches follow at residues 40-77 and 124-162; these read VFGKPKTTNKKPSIWSKQNVGVSNRAEKDAEQKIEEQK and EMEASGAHRDSQKAGERDDDEENLPEGEIPPPQDPSEEW. Residues 63–99 adopt a coiled-coil conformation; the sequence is NRAEKDAEQKIEEQKTLDKAREKLEEKAKLYEKMTKG. Basic and acidic residues-rich tracts occupy residues 64–77 and 124–139; these read RAEKDAEQKIEEQK and EMEASGAHRDSQKAGE. Serine 197 carries the post-translational modification Phosphoserine. Positions 267–309 form a coiled coil; that stretch reads LEMLREQTTDQRTKRENIKEKRKAILEARLAKLRQKKMKKSKE. 2 disordered regions span residues 299-363 and 378-453; these read LRQK…HIRE and RQSD…TVTF. Positions 324–336 are enriched in pro residues; sequence PLPPEPEAVPTPR. Composition is skewed to basic and acidic residues over residues 348–363 and 378–389; these read VQERKDTKPGVPHIRE and RQSDLRAERDPE. The segment covering 425–437 has biased composition (polar residues); the sequence is PDQSHGPSPEHTS. Positions 439–448 are enriched in pro residues; the sequence is TPAPDNPPQA.

Widely expressed.

It localises to the nucleus. Probably involved in neuronal development. The polypeptide is Coiled-coil domain-containing protein 174 (CCDC174) (Homo sapiens (Human)).